The primary structure comprises 126 residues: Large ribosomal subunit protein eL8 (126 aa).

The protein belongs to the eukaryotic ribosomal protein eL8 family. In terms of assembly, part of the 50S ribosomal subunit. Probably part of the RNase P complex.

Its subcellular location is the cytoplasm. Multifunctional RNA-binding protein that recognizes the K-turn motif in ribosomal RNA, the RNA component of RNase P, box H/ACA, box C/D and box C'/D' sRNAs. The polypeptide is Large ribosomal subunit protein eL8 (Sulfolobus acidocaldarius (strain ATCC 33909 / DSM 639 / JCM 8929 / NBRC 15157 / NCIMB 11770)).